The chain runs to 156 residues: S-ribosylhomocysteine lyase (156 aa).

Residues H53, H57, and C122 each contribute to the Fe cation site.

The protein belongs to the LuxS family. In terms of assembly, homodimer. The cofactor is Fe cation.

The catalysed reaction is S-(5-deoxy-D-ribos-5-yl)-L-homocysteine = (S)-4,5-dihydroxypentane-2,3-dione + L-homocysteine. Its function is as follows. Involved in the synthesis of autoinducer 2 (AI-2) which is secreted by bacteria and is used to communicate both the cell density and the metabolic potential of the environment. The regulation of gene expression in response to changes in cell density is called quorum sensing. Catalyzes the transformation of S-ribosylhomocysteine (RHC) to homocysteine (HC) and 4,5-dihydroxy-2,3-pentadione (DPD). In Finegoldia magna (strain ATCC 29328 / DSM 20472 / WAL 2508) (Peptostreptococcus magnus), this protein is S-ribosylhomocysteine lyase.